Consider the following 444-residue polypeptide: tRNA modification GTPase MnmE (444 aa).

(6S)-5-formyl-5,6,7,8-tetrahydrofolate contacts are provided by R23, E82, and K121. Positions 216–365 constitute a TrmE-type G domain; that stretch reads GTSIVLAGLP…LKQALQKWLN (150 aa). Residue N226 coordinates K(+). GTP is bound by residues 226–231, 245–251, and 270–273; these read NAGKSS, TDIPGTT, and DSAG. S230 serves as a coordination point for Mg(2+). K(+)-binding residues include T245, I247, and T250. Residue T251 participates in Mg(2+) binding. (6S)-5-formyl-5,6,7,8-tetrahydrofolate is bound at residue K444.

Belongs to the TRAFAC class TrmE-Era-EngA-EngB-Septin-like GTPase superfamily. TrmE GTPase family. As to quaternary structure, homodimer. Heterotetramer of two MnmE and two MnmG subunits. Requires K(+) as cofactor.

Its subcellular location is the cytoplasm. Exhibits a very high intrinsic GTPase hydrolysis rate. Involved in the addition of a carboxymethylaminomethyl (cmnm) group at the wobble position (U34) of certain tRNAs, forming tRNA-cmnm(5)s(2)U34. The polypeptide is tRNA modification GTPase MnmE (Chlamydia trachomatis serovar A (strain ATCC VR-571B / DSM 19440 / HAR-13)).